A 592-amino-acid polypeptide reads, in one-letter code: Protein kinase C zeta type (592 aa).

Residues 15 to 98 (RVRLKAHYGG…EVLIIHVFPS (84 aa)) form the PB1 domain. Residues 79–145 (AFRLVCQGRD…KRFNRGAYCG (67 aa)) form an interaction with SQSTM1 region. The Phorbol-ester/DAG-type zinc finger occupies 130–180 (GHLFQAKRFNRGAYCGQCSERIWGLSRQGYRCINCKLLVHKRCHVLVPLTC). Positions 252-518 (FDLIRVIGRG…FSDIKSHAFF (267 aa)) constitute a Protein kinase domain. ATP contacts are provided by residues 258–266 (IGRGSYAKV) and Lys281. Asp376 acts as the Proton acceptor in catalysis. Thr410 carries the post-translational modification Phosphothreonine; by PDPK1 and PI3K. Positions 519 to 590 (RSIDWDLLEK…INPLLLSAEE (72 aa)) constitute an AGC-kinase C-terminal domain. At Thr560 the chain carries Phosphothreonine. A Phosphoserine modification is found at Ser591.

The protein belongs to the protein kinase superfamily. AGC Ser/Thr protein kinase family. PKC subfamily. In terms of assembly, interacts directly with SQSTM1. Forms a ternary complex with SQSTM1 and KCNAB2. Forms another ternary complex with SQSTM1 and GABRR3. Forms a complex with SQSTM1 and MAP2K5. Interacts with PARD6A, PARD6B and PARD6G. Part of a complex with PARD3, PARD6A or PARD6B or PARD6G and CDC42 or RAC1. Interacts with ADAP1/CENTA1. Interacts (via the protein kinase domain) with WWC1. Forms a tripartite complex with WWC1 and DDR1, but predominantly in the absence of collagen. Interacts with PDPK1 (via N-terminal region). Interacts with WDFY2 (via WD repeats 1-3). Interacts with VAMP2. Forms a complex with WDFY2 and VAMP2. Interacts with APPL1. Interacts with WWC1, WWC2 and WWC3. Post-translationally, CDH5 is required for its phosphorylation at Thr-410. Phosphorylated by protein kinase PDPK1; phosphorylation is inhibited by the apoptotic C-terminal cleavage product of PKN2. Phosphorylation at Thr-410 by PI3K activates the kinase. Isoform 1: In brain, highly expressed in cerebellar granule neurons and cerebellar astrocytes (at protein level). Expressed at low levels in testes, lung and kidney. Isoform 2: Specifically expressed in brain where it localizes to cerebellar granule neurons (at protein level).

The protein resides in the cytoplasm. Its subcellular location is the endosome. The protein localises to the cell junction. It localises to the membrane. The enzyme catalyses L-seryl-[protein] + ATP = O-phospho-L-seryl-[protein] + ADP + H(+). It carries out the reaction L-threonyl-[protein] + ATP = O-phospho-L-threonyl-[protein] + ADP + H(+). Its activity is regulated as follows. Atypical PKCs (PRKCI and PRKCZ) exhibit an elevated basal enzymatic activity (that may be due to the interaction with SMG1 or SQSTM1) and are not regulated by diacylglycerol, phosphatidylserine, phorbol esters or calcium ions. Two specific sites, Thr-410 (activation loop of the kinase domain) and Thr-560 (turn motif), need to be phosphorylated for its full activation. Phosphatidylinositol 3,4,5-trisphosphate might be a physiological activator. Isoform 2: Constitutively active. Functionally, calcium- and diacylglycerol-independent serine/threonine-protein kinase that functions in phosphatidylinositol 3-kinase (PI3K) pathway and mitogen-activated protein (MAP) kinase cascade, and is involved in NF-kappa-B activation, mitogenic signaling, cell proliferation, cell polarity, inflammatory response and maintenance of long-term potentiation (LTP). Upon lipopolysaccharide (LPS) treatment in macrophages, or following mitogenic stimuli, functions downstream of PI3K to activate MAP2K1/MEK1-MAPK1/ERK2 signaling cascade independently of RAF1 activation. Required for insulin-dependent activation of AKT3, but may function as an adapter rather than a direct activator. Upon insulin treatment may act as a downstream effector of PI3K and contribute to the activation of translocation of the glucose transporter SLC2A4/GLUT4 and subsequent glucose transport in adipocytes. In EGF-induced cells, binds and activates MAP2K5/MEK5-MAPK7/ERK5 independently of its kinase activity and can activate JUN promoter through MEF2C. Through binding with SQSTM1/p62, functions in interleukin-1 signaling and activation of NF-kappa-B with the specific adapters RIPK1 and TRAF6. Participates in TNF-dependent transactivation of NF-kappa-B by phosphorylating and activating IKBKB kinase, which in turn leads to the degradation of NF-kappa-B inhibitors. In migrating astrocytes, forms a cytoplasmic complex with PARD6A and is recruited by CDC42 to function in the establishment of cell polarity along with the microtubule motor and dynein. In association with FEZ1, stimulates neuronal differentiation in PC12 cells. In the inflammatory response, is required for the T-helper 2 (Th2) differentiation process, including interleukin production, efficient activation of JAK1 and the subsequent phosphorylation and nuclear translocation of STAT6. May be involved in development of allergic airway inflammation (asthma), a process dependent on Th2 immune response. In the NF-kappa-B-mediated inflammatory response, can relieve SETD6-dependent repression of NF-kappa-B target genes by phosphorylating the RELA subunit at 'Ser-311'. Phosphorylates VAMP2 in vitro. Phosphorylates and activates LRRK1, which phosphorylates RAB proteins involved in intracellular trafficking. In terms of biological role, involved in late synaptic long term potentiation phase in CA1 hippocampal cells and long term memory maintenance. The polypeptide is Protein kinase C zeta type (Prkcz) (Mus musculus (Mouse)).